Here is a 202-residue protein sequence, read N- to C-terminus: Orotate phosphoribosyltransferase (202 aa).

Residues Lys-93 and 113-121 (EDIITTGGS) each bind 5-phospho-alpha-D-ribose 1-diphosphate. Positions 117 and 145 each coordinate orotate.

Belongs to the purine/pyrimidine phosphoribosyltransferase family. PyrE subfamily. Homodimer. Mg(2+) serves as cofactor.

The enzyme catalyses orotidine 5'-phosphate + diphosphate = orotate + 5-phospho-alpha-D-ribose 1-diphosphate. It participates in pyrimidine metabolism; UMP biosynthesis via de novo pathway; UMP from orotate: step 1/2. Catalyzes the transfer of a ribosyl phosphate group from 5-phosphoribose 1-diphosphate to orotate, leading to the formation of orotidine monophosphate (OMP). The sequence is that of Orotate phosphoribosyltransferase from Campylobacter hominis (strain ATCC BAA-381 / DSM 21671 / CCUG 45161 / LMG 19568 / NCTC 13146 / CH001A).